Here is a 367-residue protein sequence, read N- to C-terminus: Alginate lyase (367 aa).

A signal peptide spans 1–24 (MTIFKRISSPALLALALFGGAAHA). Substrate is bound by residues 63 to 64 (SK), 136 to 137 (HT), and Tyr254.

The protein belongs to the polysaccharide lyase 5 family.

The protein resides in the periplasm. It carries out the reaction Eliminative cleavage of alginate to give oligosaccharides with 4-deoxy-alpha-L-erythro-hex-4-enuronosyl groups at their non-reducing ends and beta-D-mannuronate at their reducing end.. Catalyzes the depolymerization of alginate by cleaving the beta-1,4 glycosidic bond between two adjacent sugar residues via a beta-elimination mechanism. May serve to degrade mislocalized alginate that is trapped in the periplasmic space. This chain is Alginate lyase, found in Pseudomonas putida (strain ATCC 700007 / DSM 6899 / JCM 31910 / BCRC 17059 / LMG 24140 / F1).